A 246-amino-acid polypeptide reads, in one-letter code: Endonuclease V (246 aa).

Mg(2+)-binding residues include aspartate 50 and aspartate 120.

This sequence belongs to the endonuclease V family. Mg(2+) is required as a cofactor.

It is found in the cytoplasm. The catalysed reaction is Endonucleolytic cleavage at apurinic or apyrimidinic sites to products with a 5'-phosphate.. Its function is as follows. DNA repair enzyme involved in the repair of deaminated bases. Selectively cleaves double-stranded DNA at the second phosphodiester bond 3' to a deoxyinosine leaving behind the intact lesion on the nicked DNA. The polypeptide is Endonuclease V (Gloeobacter violaceus (strain ATCC 29082 / PCC 7421)).